The chain runs to 506 residues: Maturase K (506 aa).

The protein belongs to the intron maturase 2 family. MatK subfamily.

The protein localises to the plastid. The protein resides in the chloroplast. Its function is as follows. Usually encoded in the trnK tRNA gene intron. Probably assists in splicing its own and other chloroplast group II introns. This is Maturase K from Trifolium wormskioldii (Cows clover).